Reading from the N-terminus, the 415-residue chain is Arginine biosynthesis bifunctional protein ArgJ (415 aa).

Residues Thr-156, Lys-182, Thr-193, Glu-279, Asn-410, and Thr-415 each contribute to the substrate site. The active-site Nucleophile is the Thr-193.

The protein belongs to the ArgJ family. As to quaternary structure, heterotetramer of two alpha and two beta chains.

Its subcellular location is the cytoplasm. The enzyme catalyses N(2)-acetyl-L-ornithine + L-glutamate = N-acetyl-L-glutamate + L-ornithine. It carries out the reaction L-glutamate + acetyl-CoA = N-acetyl-L-glutamate + CoA + H(+). It functions in the pathway amino-acid biosynthesis; L-arginine biosynthesis; L-ornithine and N-acetyl-L-glutamate from L-glutamate and N(2)-acetyl-L-ornithine (cyclic): step 1/1. Its pathway is amino-acid biosynthesis; L-arginine biosynthesis; N(2)-acetyl-L-ornithine from L-glutamate: step 1/4. Functionally, catalyzes two activities which are involved in the cyclic version of arginine biosynthesis: the synthesis of N-acetylglutamate from glutamate and acetyl-CoA as the acetyl donor, and of ornithine by transacetylation between N(2)-acetylornithine and glutamate. The protein is Arginine biosynthesis bifunctional protein ArgJ of Synechococcus sp. (strain ATCC 27144 / PCC 6301 / SAUG 1402/1) (Anacystis nidulans).